Consider the following 561-residue polypeptide: Arginine--tRNA ligase (561 aa).

Positions 128–138 (ANPTGPLHVGH) match the 'HIGH' region motif.

Belongs to the class-I aminoacyl-tRNA synthetase family. As to quaternary structure, monomer.

It localises to the cytoplasm. The enzyme catalyses tRNA(Arg) + L-arginine + ATP = L-arginyl-tRNA(Arg) + AMP + diphosphate. The sequence is that of Arginine--tRNA ligase from Methylibium petroleiphilum (strain ATCC BAA-1232 / LMG 22953 / PM1).